The following is a 521-amino-acid chain: Two-component response regulator ARR11 (521 aa).

The Response regulatory domain occupies 12-127 (RVLVVDDDPT…ELKIIWQHVL (116 aa)). D63 carries the post-translational modification 4-aspartylphosphate. The Nuclear localization signal motif lies at 192 to 195 (KKAR). Positions 195–246 (RVVWSFELHHKFVNAVNQIGCDHKAGPKKILDLMNVPWLTRENVASHLQKYR) form a DNA-binding region, myb-like GARP.

It belongs to the ARR family. Type-B subfamily. In terms of assembly, binds the target DNA as a monomer. In terms of processing, two-component system major event consists of a His-to-Asp phosphorelay between a sensor histidine kinase (HK) and a response regulator (RR). In plants, the His-to-Asp phosphorelay involves an additional intermediate named Histidine-containing phosphotransfer protein (HPt). This multistep phosphorelay consists of a His-Asp-His-Asp sequential transfer of a phosphate group between first a His and an Asp of the HK protein, followed by the transfer to a conserved His of the HPt protein and finally the transfer to an Asp in the receiver domain of the RR protein. In terms of tissue distribution, detected in the whole plant. Predominantly expressed in roots and stems.

Its subcellular location is the nucleus. Its function is as follows. Transcriptional activator that binds specifically to the DNA sequence 5'-[AG]GATT-3'. Functions as a response regulator involved in His-to-Asp phosphorelay signal transduction system. Phosphorylation of the Asp residue in the receiver domain activates the ability of the protein to promote the transcription of target genes. Could directly activate some type-A response regulators in response to cytokinins. This is Two-component response regulator ARR11 (ARR11) from Arabidopsis thaliana (Mouse-ear cress).